The chain runs to 426 residues: MAESEEEVDVLVQRVVKDITNAFKRNPNIDEIGLIPCPEARYNRSPIVLVENKLGVESWCVKFLLPYVHNKLLLYRQRKQWLDREALVDITSTLLLLNPDFTTAWNVRKELLQCGVLNPEKDLYLGKLALSKHPKSPETWIHRRWVLQRLQKECSPSGQELKDSAESRRQCERLQRALQEEMRVCAEAAGRYPSNYNAWSHRIWVLQNMAKGNLKVLHDELSSTRLWVSMHVSDHSGFHYRQHLLKALAKELSPAAEKDVHTSQQPNGENTATASDDNHHKDVMPRLFHEEIQLCTDLIESYPGHETLWCHRRHVFYLWHQWRREHMQGAGSQSPALTHTDVLLSKELCDNNSISQAMDIDCVLDGSKHGSYTQDTKRLKRGPLLLQPGFPSEHTFISRILTGCRNPEQSRFAIAYRKWLDSVIGQ.

PFTA repeat units lie at residues 86–119, 121–154, 180–213, and 219–252; these read ALVD…VLNP, KDLY…QKEC, EEMR…AKGN, and DELS…AKEL. The tract at residues 255–279 is disordered; that stretch reads AAEKDVHTSQQPNGENTATASDDNH. Over residues 262–275 the composition is skewed to polar residues; the sequence is TSQQPNGENTATAS. A PFTA 5 repeat occupies 290 to 323; sequence EEIQLCTDLIESYPGHETLWCHRRHVFYLWHQWR.

This sequence belongs to the protein prenyltransferase subunit alpha family.

This Danio rerio (Zebrafish) protein is Protein prenyltransferase alpha subunit repeat-containing protein 1 (ptar1).